An 82-amino-acid chain; its full sequence is MGAIAVLFIVFGFPIVAGVFGIAGHFLFKRFWVAPLIVLITSLILLVTLASGNSSFIFWVVMYTAIALVTSVATLFLRKFFE.

A run of 3 helical transmembrane segments spans residues 4–26 (IAVL…AGHF), 31–50 (FWVA…VTLA), and 55–77 (SFIF…TLFL).

It is found in the cell membrane. This is an uncharacterized protein from Bacillus subtilis (strain 168).